Here is a 329-residue protein sequence, read N- to C-terminus: DNA-directed RNA polymerase subunit alpha (329 aa).

The interval 1–235 is alpha N-terminal domain (alpha-NTD); sequence MQGSVTEFLK…EQLEAFVDLR (235 aa). The tract at residues 249-329 is alpha C-terminal domain (alpha-CTD); that stretch reads FDPILLRPVD…NWPPASIADE (81 aa).

This sequence belongs to the RNA polymerase alpha chain family. In terms of assembly, homodimer. The RNAP catalytic core consists of 2 alpha, 1 beta, 1 beta' and 1 omega subunit. When a sigma factor is associated with the core the holoenzyme is formed, which can initiate transcription.

It carries out the reaction RNA(n) + a ribonucleoside 5'-triphosphate = RNA(n+1) + diphosphate. In terms of biological role, DNA-dependent RNA polymerase catalyzes the transcription of DNA into RNA using the four ribonucleoside triphosphates as substrates. This Pectobacterium atrosepticum (strain SCRI 1043 / ATCC BAA-672) (Erwinia carotovora subsp. atroseptica) protein is DNA-directed RNA polymerase subunit alpha.